A 348-amino-acid chain; its full sequence is Galanin receptor type 1 (348 aa).

Over 1–34 (MELAMVNLSEGNGSDPEPPAPESRPLFGIGVENF) the chain is Extracellular. Residues Asn7 and Asn12 are each glycosylated (N-linked (GlcNAc...) asparagine). The chain crosses the membrane as a helical span at residues 35–55 (ITLVVFGLIFAMGVLGNSLVI). At 56–70 (TVLARSKPGKPRSTT) the chain is on the cytoplasmic side. A helical membrane pass occupies residues 71 to 91 (NLFILNLSIADLAYLLFCIPF). The Extracellular portion of the chain corresponds to 92–109 (QATVYALPTWVLGAFICK). An intrachain disulfide couples Cys108 to Cys186. A helical transmembrane segment spans residues 110 to 131 (FIHYFFTVSMLVSIFTLAAMSV). Topologically, residues 132 to 151 (DRYVAIVHSRRSSSLRVSRN) are cytoplasmic. The chain crosses the membrane as a helical span at residues 152–172 (ALLGVGFIWALSIAMASPVAY). Over 173 to 197 (HQRLFHRDSNQTFCWEQWPNKLHKK) the chain is Extracellular. N-linked (GlcNAc...) asparagine glycosylation occurs at Asn182. A helical transmembrane segment spans residues 198–218 (AYVVCTFVFGYLLPLLLICFC). The Cytoplasmic segment spans residues 219-247 (YAKVLNHLHKKLKNMSKKSEASKKKTAQT). Residues 248–268 (VLVVVVVFGISWLPHHVVHLW) form a helical membrane-spanning segment. At 269 to 270 (AE) the chain is on the extracellular side. A helical transmembrane segment spans residues 271–291 (FGAFPLTPASFFFRITAHCLA). Residues 292 to 348 (YSNSSVNPIIYAFLSENFRKAYKQVFKCHVCDESPRSETKENKSRMDTPPSTNCTHV) lie on the Cytoplasmic side of the membrane. Cys319 is lipidated: S-palmitoyl cysteine. Positions 328–337 (SETKENKSRM) are enriched in basic and acidic residues. Residues 328 to 348 (SETKENKSRMDTPPSTNCTHV) are disordered.

The protein belongs to the G-protein coupled receptor 1 family. As to quaternary structure, interacts with GRP39 AND HTR1A. Three cysteine residues are found in the C-terminus, at least one of which may be palmitoylated. In terms of tissue distribution, expression is detected in brain, spinal cord, heart and skeletal muscle.

The protein resides in the cell membrane. Receptor for the hormone galanin. The activity of this receptor is mediated by G proteins that inhibit adenylate cyclase activity. The chain is Galanin receptor type 1 (Galr1) from Mus musculus (Mouse).